The following is a 419-amino-acid chain: UDP-N-acetylglucosamine 1-carboxyvinyltransferase (419 aa).

22–23 lines the phosphoenolpyruvate pocket; the sequence is KN. UDP-N-acetyl-alpha-D-glucosamine is bound at residue R93. C117 acts as the Proton donor in catalysis. C117 carries the 2-(S-cysteinyl)pyruvic acid O-phosphothioketal modification. Residues D306 and V328 each contribute to the UDP-N-acetyl-alpha-D-glucosamine site.

It belongs to the EPSP synthase family. MurA subfamily.

The protein resides in the cytoplasm. It carries out the reaction phosphoenolpyruvate + UDP-N-acetyl-alpha-D-glucosamine = UDP-N-acetyl-3-O-(1-carboxyvinyl)-alpha-D-glucosamine + phosphate. It functions in the pathway cell wall biogenesis; peptidoglycan biosynthesis. In terms of biological role, cell wall formation. Adds enolpyruvyl to UDP-N-acetylglucosamine. In Thioalkalivibrio sulfidiphilus (strain HL-EbGR7), this protein is UDP-N-acetylglucosamine 1-carboxyvinyltransferase.